The primary structure comprises 700 residues: Polyribonucleotide nucleotidyltransferase (700 aa).

2 residues coordinate Mg(2+): D486 and D492. The KH domain occupies 554-613 (PKIISTTINPDKIREVIGPGGKMINKIIDETGVKIDINDDGRVYIFSSDIQAGKRARSMI). Positions 623-691 (GQVFLGRVIR…KQGRVNLSRK (69 aa)) constitute an S1 motif domain.

This sequence belongs to the polyribonucleotide nucleotidyltransferase family. Mg(2+) is required as a cofactor.

It is found in the cytoplasm. The catalysed reaction is RNA(n+1) + phosphate = RNA(n) + a ribonucleoside 5'-diphosphate. Its function is as follows. Involved in mRNA degradation. Catalyzes the phosphorolysis of single-stranded polyribonucleotides processively in the 3'- to 5'-direction. This is Polyribonucleotide nucleotidyltransferase from Acetivibrio thermocellus (strain ATCC 27405 / DSM 1237 / JCM 9322 / NBRC 103400 / NCIMB 10682 / NRRL B-4536 / VPI 7372) (Clostridium thermocellum).